A 223-amino-acid chain; its full sequence is Proteinase inhibitor type-2 TR8 (223 aa).

The signal sequence occupies residues 1–24 (MAIYKVALLLLFGMILLASDFEHA). Tandem repeats lie at residues 24-81 (AKAC…EWVS), 88-145 (KKAC…EWVS), and 152-209 (EKDC…EWVS). Intrachain disulfides connect cysteine 27–cysteine 120, cysteine 31–cysteine 116, cysteine 40–cysteine 126, cysteine 52–cysteine 95, cysteine 55–cysteine 73, cysteine 56–cysteine 91, cysteine 62–cysteine 104, and cysteine 119–cysteine 137.

The protein belongs to the protease inhibitor I20 (potato type II proteinase inhibitor) family.

The chain is Proteinase inhibitor type-2 TR8 (ARPI) from Solanum lycopersicum (Tomato).